A 1342-amino-acid chain; its full sequence is DNA-directed RNA polymerase subunit beta (1342 aa).

The protein belongs to the RNA polymerase beta chain family. The RNAP catalytic core consists of 2 alpha, 1 beta, 1 beta' and 1 omega subunit. When a sigma factor is associated with the core the holoenzyme is formed, which can initiate transcription.

It catalyses the reaction RNA(n) + a ribonucleoside 5'-triphosphate = RNA(n+1) + diphosphate. Functionally, DNA-dependent RNA polymerase catalyzes the transcription of DNA into RNA using the four ribonucleoside triphosphates as substrates. The sequence is that of DNA-directed RNA polymerase subunit beta from Yersinia pseudotuberculosis serotype O:1b (strain IP 31758).